Here is a 108-residue protein sequence, read N- to C-terminus: Parvalbumin alpha (108 aa).

N-acetylalanine is present on alanine 1. EF-hand domains are found at residues 37-72 (MSANDVKKVFKAIDADASGFIEEEELKFVLKSFAAD) and 76-108 (LTDAETKAFLKAADKDGDGKIGIDEFETLVHEA). Ca(2+)-binding residues include aspartate 50, aspartate 52, serine 54, phenylalanine 56, glutamate 58, glutamate 61, aspartate 89, aspartate 91, aspartate 93, lysine 95, and glutamate 100.

It belongs to the parvalbumin family.

Its function is as follows. In muscle, parvalbumin is thought to be involved in relaxation after contraction. It binds two calcium ions. The protein is Parvalbumin alpha of Esox lucius (Northern pike).